A 206-amino-acid polypeptide reads, in one-letter code: Regulatory protein CysR (206 aa).

In terms of domain architecture, HTH crp-type spans R120–E196. Positions H156–G175 form a DNA-binding region, H-T-H motif.

The protein resides in the cytoplasm. In terms of biological role, probably regulates the expression of genes from the sulfate permease complex. The sequence is that of Regulatory protein CysR (cysR) from Synechococcus elongatus (strain ATCC 33912 / PCC 7942 / FACHB-805) (Anacystis nidulans R2).